The sequence spans 209 residues: Small ribosomal subunit protein uS3 (209 aa).

The KH type-2 domain occupies 38-107 (IRKVVKNAYS…RVIVNVEEIK (70 aa)).

Belongs to the universal ribosomal protein uS3 family. Part of the 30S ribosomal subunit. Forms a tight complex with proteins S10 and S14.

In terms of biological role, binds the lower part of the 30S subunit head. Binds mRNA in the 70S ribosome, positioning it for translation. The sequence is that of Small ribosomal subunit protein uS3 from Pseudothermotoga lettingae (strain ATCC BAA-301 / DSM 14385 / NBRC 107922 / TMO) (Thermotoga lettingae).